Here is a 546-residue protein sequence, read N- to C-terminus: CTP synthase (546 aa).

Positions 1-266 (MTTNYIFVTG…DELVCKRFGI (266 aa)) are amidoligase domain. Serine 14 is a CTP binding site. Serine 14 provides a ligand contact to UTP. ATP contacts are provided by residues 15–20 (SLGKGI) and aspartate 72. Mg(2+)-binding residues include aspartate 72 and glutamate 140. Residues 147–149 (DIE), 187–192 (KTKPTQ), and lysine 223 contribute to the CTP site. UTP contacts are provided by residues 187–192 (KTKPTQ) and lysine 223. An ATP-binding site is contributed by 239-241 (RDV). The 252-residue stretch at 291–542 (TIGMVGKYIE…VKAAGEFQRG (252 aa)) folds into the Glutamine amidotransferase type-1 domain. Residue glycine 352 coordinates L-glutamine. Cysteine 379 serves as the catalytic Nucleophile; for glutamine hydrolysis. L-glutamine-binding positions include 380–383 (LGMQ), glutamate 403, and arginine 470. Residues histidine 515 and glutamate 517 contribute to the active site.

It belongs to the CTP synthase family. In terms of assembly, homotetramer.

The enzyme catalyses UTP + L-glutamine + ATP + H2O = CTP + L-glutamate + ADP + phosphate + 2 H(+). It catalyses the reaction L-glutamine + H2O = L-glutamate + NH4(+). It carries out the reaction UTP + NH4(+) + ATP = CTP + ADP + phosphate + 2 H(+). It participates in pyrimidine metabolism; CTP biosynthesis via de novo pathway; CTP from UDP: step 2/2. With respect to regulation, allosterically activated by GTP, when glutamine is the substrate; GTP has no effect on the reaction when ammonia is the substrate. The allosteric effector GTP functions by stabilizing the protein conformation that binds the tetrahedral intermediate(s) formed during glutamine hydrolysis. Inhibited by the product CTP, via allosteric rather than competitive inhibition. In terms of biological role, catalyzes the ATP-dependent amination of UTP to CTP with either L-glutamine or ammonia as the source of nitrogen. Regulates intracellular CTP levels through interactions with the four ribonucleotide triphosphates. The sequence is that of CTP synthase from Vibrio atlanticus (strain LGP32) (Vibrio splendidus (strain Mel32)).